The following is a 211-amino-acid chain: Metalloproteinase inhibitor 3 (211 aa).

A signal peptide spans Met-1–Ala-23. Residue Cys-24 coordinates Zn(2+). Involved in metalloproteinase-binding stretches follow at residues Cys-24 to Ser-27 and Glu-88 to Ser-89. Intrachain disulfides connect Cys-24-Cys-91, Cys-26-Cys-118, Cys-36-Cys-143, Cys-145-Cys-192, Cys-150-Cys-155, and Cys-163-Cys-184. An NTR domain is found at Cys-24–Cys-143. A mediates interaction with EFEMP1 region spans residues Thr-105–Lys-188. An N-linked (GlcNAc...) asparagine glycan is attached at Asn-207.

This sequence belongs to the protease inhibitor I35 (TIMP) family. In terms of assembly, interacts with EFEMP1. Interacts with KDR.

It localises to the secreted. The protein localises to the extracellular space. The protein resides in the extracellular matrix. Its function is as follows. Mediates a variety of processes including matrix regulation and turnover, inflammation, and angiogenesis, through reversible inhibition of zinc protease superfamily enzymes, primarily matrix metalloproteinases (MMPs). Regulates extracellular matrix (ECM) remodeling through inhibition of matrix metalloproteinases (MMP) including MMP-1, MMP-2, MMP-3, MMP-7, MMP-9, MMP-13, MMP-14 and MMP-15. Additionally, modulates the processing of amyloid precursor protein (APP) and apolipoprotein E receptor ApoER2 by inhibiting two alpha-secretases ADAM10 and ADAM17. Functions as a tumor suppressor and a potent inhibitor of angiogenesis. Exerts its anti-angiogenic effect by directly interacting with vascular endothelial growth factor (VEGF) receptor-2/KDR, preventing its binding to the VEGFA ligand. Selectively induces apoptosis in angiogenic endothelial cells through a caspase-independent cell death pathway. Mechanistically, inhibits matrix-induced focal adhesion kinase PTK2 tyrosine phosphorylation and association with paxillin/PXN and disrupts the incorporation of ITGB3, PTK2 and PXN into focal adhesion contacts on the matrix. The sequence is that of Metalloproteinase inhibitor 3 (TIMP3) from Equus caballus (Horse).